An 855-amino-acid polypeptide reads, in one-letter code: Cell surface glycoprotein (855 aa).

A signal peptide spans 1–22; that stretch reads MTANKQVRAVLLAALMVFSVFA. 19 N-linked (GlcNAc...) asparagine glycosylation sites follow: asparagine 78, asparagine 83, asparagine 108, asparagine 167, asparagine 174, asparagine 187, asparagine 203, asparagine 227, asparagine 230, asparagine 313, asparagine 363, asparagine 441, asparagine 548, asparagine 588, asparagine 608, asparagine 620, asparagine 642, asparagine 656, and asparagine 754. Positions 782-802 are enriched in low complexity; the sequence is ETTTAAETTTTEESTETTTTE. A disordered region spans residues 782–831; sequence ETTTAAETTTTEESTETTTTEESTEEPTETATATEEPTEEATEETTESST. The span at 817–827 shows a compositional bias: acidic residues; sequence EPTEEATEETT. A helical membrane pass occupies residues 831–851; sequence TPGFGVVVALVALVAAALLAV. The PGF sorting signal motif lies at 832–834; that stretch reads PGF.

It belongs to the halobacterial S-layer protein family. Post-translationally, glycosylated. Cleaved by the archaeosortase ArtA at the C-terminus, with removal of a short hydrophobic segment. In terms of processing, lipidation.

Its subcellular location is the secreted. It is found in the cell wall. The protein localises to the S-layer. It localises to the cell membrane. Functionally, S-layer protein. The S-layer is a paracrystalline mono-layered assembly of proteins which coats the surface of the cell. The polypeptide is Cell surface glycoprotein (Haloferax gibbonsii).